A 371-amino-acid chain; its full sequence is Chitin deacetylase (371 aa).

Positions 1–20 are cleaved as a signal peptide; that stretch reads MLCRLFTLFITAALACCVAA. The tract at residues 73–112 is disordered; sequence PKPEPEPTAVPTMAPEPTTVPPTEPSGTYPPETTPTVEPT. 2 stretches are compositionally biased toward low complexity: residues 79-89 and 102-112; these read PTAVPTMAPEP and PPETTPTVEPT. Cysteine 164 and cysteine 358 form a disulfide bridge. Asparagine 167 is a glycosylation site (N-linked (GlcNAc...) asparagine). A NodB homology domain is found at 168-353; that stretch reads GTIALTFDDG…EIKKRGLRAV (186 aa). Catalysis depends on aspartate 175, which acts as the Proton acceptor. Aspartate 175 is a binding site for acetate. Positions 176, 228, and 232 each coordinate Co(2+). An N-linked (GlcNAc...) asparagine glycan is attached at asparagine 239. Tyrosine 270 is a binding site for acetate. The Proton donor role is filled by histidine 327.

Belongs to the polysaccharide deacetylase family. It depends on Co(2+) as a cofactor.

It catalyses the reaction [(1-&gt;4)-N-acetyl-beta-D-glucosaminyl](n) + n H2O = chitosan + n acetate. Hydrolyzes the N-acetamido groups of N-acetyl-D-glucosamine residues in chitin to form chitosan and acetate. The protein is Chitin deacetylase of Arthroderma benhamiae (strain ATCC MYA-4681 / CBS 112371) (Trichophyton mentagrophytes).